The sequence spans 127 residues: Gamma-synuclein (127 aa).

Repeat copies occupy residues 20 to 30 (EKTKQGVTEAA) and 31 to 41 (EKTKEGVMYVG). Residues 20–67 (EKTKQGVTEAAEKTKEGVMYVGAKTKEGVVQSVTSVAEKTKEQANAVS) form a 4 X 11 AA tandem repeats of [EGSA]-K-T-K-[EQ]-[GQ]-V-X(4) region. One copy of the 3; approximate repeat lies at 42-56 (AKTKEGVVQSVTSVA). Repeat unit 4 spans residues 57-67 (EKTKEQANAVS). Phosphoserine occurs at positions 67, 72, and 124. Residues 99–127 (ALKQPVPSQEDEAAKAEEQVAEETKSGGD) are disordered. Basic and acidic residues predominate over residues 110-127 (EAAKAEEQVAEETKSGGD).

Belongs to the synuclein family. In terms of assembly, may be a centrosome-associated protein. Interacts with MYOC; affects its secretion and its aggregation. In terms of processing, phosphorylated by BARK1 and GRK5. Predominantly expressed in retina (predominantly in outer nuclear layer, also in inner segment of photoreceptor cells, some individual cells located in the inner nuclear layer, inner plexiform layer and in nerve fiber layer). Also found in brain and heart.

It localises to the cytoplasm. Its subcellular location is the perinuclear region. The protein localises to the cytoskeleton. It is found in the microtubule organizing center. The protein resides in the centrosome. It localises to the spindle. Its function is as follows. Plays a role in neurofilament network integrity. May be involved in modulating axonal architecture during development and in the adult. In vitro, increases the susceptibility of neurofilament-H to calcium-dependent proteases. May also function in modulating the keratin network in skin. Activates the MAPK and Elk-1 signal transduction pathway. In Bos taurus (Bovine), this protein is Gamma-synuclein (SNCG).